The sequence spans 397 residues: F-box protein At3g49450 (397 aa).

The region spanning 26–75 (GENSGTLPTDLMVEILSRVPAKSAARFRCVSNDWNSLLRSPYLTNLFLKR) is the F-box domain.

This is F-box protein At3g49450 from Arabidopsis thaliana (Mouse-ear cress).